The sequence spans 160 residues: UPF0758 protein YfjY (160 aa).

The MPN domain occupies 38-160 (AFTSTQAARD…IYSFAEHGLL (123 aa)). Positions 109, 111, and 122 each coordinate Zn(2+). The JAMM motif motif lies at 109–122 (HNHPSGDTTPSQAD).

Belongs to the UPF0758 family.

The sequence is that of UPF0758 protein YfjY (yfjY) from Escherichia coli (strain K12).